The following is a 396-amino-acid chain: Elongation factor Tu (396 aa).

Positions 10-206 (KPHVNVGTIG…ALDNYIPLPE (197 aa)) constitute a tr-type G domain. A G1 region spans residues 19–26 (GHVDHGKT). 19–26 (GHVDHGKT) provides a ligand contact to GTP. Threonine 26 is a Mg(2+) binding site. A G2 region spans residues 60–64 (GITIN). A G3 region spans residues 81-84 (DCPG). Residues 81 to 85 (DCPGH) and 136 to 139 (NKCD) contribute to the GTP site. Residues 136 to 139 (NKCD) are G4. The interval 174-176 (SAK) is G5.

This sequence belongs to the TRAFAC class translation factor GTPase superfamily. Classic translation factor GTPase family. EF-Tu/EF-1A subfamily. As to quaternary structure, monomer.

The protein localises to the cytoplasm. It catalyses the reaction GTP + H2O = GDP + phosphate + H(+). Functionally, GTP hydrolase that promotes the GTP-dependent binding of aminoacyl-tRNA to the A-site of ribosomes during protein biosynthesis. This Polaromonas naphthalenivorans (strain CJ2) protein is Elongation factor Tu.